A 64-amino-acid chain; its full sequence is H/ACA ribonucleoprotein complex subunit 3-like protein (64 aa).

It belongs to the NOP10 family. In terms of assembly, component of the small nucleolar ribonucleoprotein particles containing H/ACA-type snoRNAs (H/ACA snoRNPs).

It is found in the nucleus. Its subcellular location is the nucleolus. Its function is as follows. Required for ribosome biogenesis. Part of a complex which catalyzes pseudouridylation of rRNA. This involves the isomerization of uridine such that the ribose is subsequently attached to C5, instead of the normal N1. Pseudouridine ('psi') residues may serve to stabilize the conformation of rRNAs. This is H/ACA ribonucleoprotein complex subunit 3-like protein from Arabidopsis thaliana (Mouse-ear cress).